Reading from the N-terminus, the 370-residue chain is 3-isopropylmalate dehydrogenase (370 aa).

The substrate site is built by arginine 99, arginine 109, arginine 137, and aspartate 227. Mg(2+) is bound by residues aspartate 227, aspartate 251, and aspartate 255. 290 to 302 is a binding site for NAD(+); sequence GSAPDIAGQDKAN.

The protein belongs to the isocitrate and isopropylmalate dehydrogenases family. LeuB type 1 subfamily. In terms of assembly, homodimer. The cofactor is Mg(2+). Mn(2+) serves as cofactor.

It is found in the cytoplasm. It carries out the reaction (2R,3S)-3-isopropylmalate + NAD(+) = 4-methyl-2-oxopentanoate + CO2 + NADH. It participates in amino-acid biosynthesis; L-leucine biosynthesis; L-leucine from 3-methyl-2-oxobutanoate: step 3/4. Catalyzes the oxidation of 3-carboxy-2-hydroxy-4-methylpentanoate (3-isopropylmalate) to 3-carboxy-4-methyl-2-oxopentanoate. The product decarboxylates to 4-methyl-2 oxopentanoate. The sequence is that of 3-isopropylmalate dehydrogenase from Rhodospirillum rubrum (strain ATCC 11170 / ATH 1.1.1 / DSM 467 / LMG 4362 / NCIMB 8255 / S1).